The chain runs to 233 residues: Superoxide dismutase [Mn], mitochondrial (233 aa).

The transit peptide at 1-27 directs the protein to the mitochondrion; that stretch reads MALRSLVTRKNLPSAFKAATGLGQLRG. Residues H55, H103, D192, and H196 each contribute to the Mn(2+) site.

It belongs to the iron/manganese superoxide dismutase family. In terms of assembly, homotetramer. Mn(2+) serves as cofactor. As to expression, present in all tissues examined (leaf, petiole, root, latex, callus) with young leaves showing the highest levels in intact plants.

It localises to the mitochondrion matrix. The enzyme catalyses 2 superoxide + 2 H(+) = H2O2 + O2. Destroys superoxide anion radicals which are normally produced within the cells and which are toxic to biological systems. This Hevea brasiliensis (Para rubber tree) protein is Superoxide dismutase [Mn], mitochondrial (SODA).